A 160-amino-acid chain; its full sequence is Lipoprotein signal peptidase (160 aa).

The next 2 helical transmembrane spans lie at 63–83 and 89–109; these read YRLP…AVTF and DQHL…GNLI. Residues Asp119 and Asp137 contribute to the active site. Residues 132–152 form a helical membrane-spanning segment; that stretch reads AFNVADSAICVGVALLAVDMI.

Belongs to the peptidase A8 family.

The protein localises to the cell inner membrane. It carries out the reaction Release of signal peptides from bacterial membrane prolipoproteins. Hydrolyzes -Xaa-Yaa-Zaa-|-(S,diacylglyceryl)Cys-, in which Xaa is hydrophobic (preferably Leu), and Yaa (Ala or Ser) and Zaa (Gly or Ala) have small, neutral side chains.. The protein operates within protein modification; lipoprotein biosynthesis (signal peptide cleavage). This protein specifically catalyzes the removal of signal peptides from prolipoproteins. This is Lipoprotein signal peptidase from Geobacter sulfurreducens (strain ATCC 51573 / DSM 12127 / PCA).